The sequence spans 231 residues: Large ribosomal subunit protein uL1 (231 aa).

Belongs to the universal ribosomal protein uL1 family. In terms of assembly, part of the 50S ribosomal subunit.

Binds directly to 23S rRNA. The L1 stalk is quite mobile in the ribosome, and is involved in E site tRNA release. Functionally, protein L1 is also a translational repressor protein, it controls the translation of the L11 operon by binding to its mRNA. In Mycoplasmopsis agalactiae (strain NCTC 10123 / CIP 59.7 / PG2) (Mycoplasma agalactiae), this protein is Large ribosomal subunit protein uL1.